The following is a 125-amino-acid chain: Small ribosomal subunit protein uS12 (125 aa).

A 3-methylthioaspartic acid modification is found at D89.

Belongs to the universal ribosomal protein uS12 family. As to quaternary structure, part of the 30S ribosomal subunit. Contacts proteins S8 and S17. May interact with IF1 in the 30S initiation complex.

In terms of biological role, with S4 and S5 plays an important role in translational accuracy. Functionally, interacts with and stabilizes bases of the 16S rRNA that are involved in tRNA selection in the A site and with the mRNA backbone. Located at the interface of the 30S and 50S subunits, it traverses the body of the 30S subunit contacting proteins on the other side and probably holding the rRNA structure together. The combined cluster of proteins S8, S12 and S17 appears to hold together the shoulder and platform of the 30S subunit. The protein is Small ribosomal subunit protein uS12 of Acidovorax sp. (strain JS42).